Here is a 367-residue protein sequence, read N- to C-terminus: Cytochrome b (367 aa).

4 helical membrane passes run 33–53 (FGSL…FLAM), 77–98 (WVLR…YLHI), 113–133 (WNMG…GYVL), and 178–198 (FFAF…VHLL). H83 and H97 together coordinate heme b. Heme b contacts are provided by H182 and H196. H201 contributes to the a ubiquinone binding site. 4 helical membrane-spanning segments follow: residues 226–246 (IKDI…VLFS), 288–308 (LGGV…PFLH), 320–340 (FSQC…WIGG), and 347–367 (YIII…VIMP).

This sequence belongs to the cytochrome b family. In terms of assembly, the cytochrome bc1 complex contains 11 subunits: 3 respiratory subunits (MT-CYB, CYC1 and UQCRFS1), 2 core proteins (UQCRC1 and UQCRC2) and 6 low-molecular weight proteins (UQCRH/QCR6, UQCRB/QCR7, UQCRQ/QCR8, UQCR10/QCR9, UQCR11/QCR10 and a cleavage product of UQCRFS1). This cytochrome bc1 complex then forms a dimer. It depends on heme b as a cofactor.

The protein localises to the mitochondrion inner membrane. In terms of biological role, component of the ubiquinol-cytochrome c reductase complex (complex III or cytochrome b-c1 complex) that is part of the mitochondrial respiratory chain. The b-c1 complex mediates electron transfer from ubiquinol to cytochrome c. Contributes to the generation of a proton gradient across the mitochondrial membrane that is then used for ATP synthesis. This chain is Cytochrome b (MT-CYB), found in Hypsugo savii (Savi's pipistrelle).